Here is a 166-residue protein sequence, read N- to C-terminus: NAD(P)H-quinone oxidoreductase subunit I, chloroplastic (166 aa).

4Fe-4S ferredoxin-type domains are found at residues 55 to 84 (GRIH…VDWK) and 95 to 124 (LNYS…MTEE). Positions 64, 67, 70, 74, 104, 107, 110, and 114 each coordinate [4Fe-4S] cluster.

The protein belongs to the complex I 23 kDa subunit family. NDH is composed of at least 16 different subunits, 5 of which are encoded in the nucleus. [4Fe-4S] cluster serves as cofactor.

The protein resides in the plastid. The protein localises to the chloroplast thylakoid membrane. The enzyme catalyses a plastoquinone + NADH + (n+1) H(+)(in) = a plastoquinol + NAD(+) + n H(+)(out). It carries out the reaction a plastoquinone + NADPH + (n+1) H(+)(in) = a plastoquinol + NADP(+) + n H(+)(out). Functionally, NDH shuttles electrons from NAD(P)H:plastoquinone, via FMN and iron-sulfur (Fe-S) centers, to quinones in the photosynthetic chain and possibly in a chloroplast respiratory chain. The immediate electron acceptor for the enzyme in this species is believed to be plastoquinone. Couples the redox reaction to proton translocation, and thus conserves the redox energy in a proton gradient. The polypeptide is NAD(P)H-quinone oxidoreductase subunit I, chloroplastic (Oblivia mikanioides (Salmea mikanioides)).